A 617-amino-acid chain; its full sequence is Phenylalanine--tRNA ligase beta subunit (617 aa).

Residues 306–383 (IQEKQINAQV…IGYGYDNLKK (78 aa)) enclose the B5 domain. The Mg(2+) site is built by aspartate 361, aspartate 367, glutamate 370, and aspartate 371.

Belongs to the phenylalanyl-tRNA synthetase beta subunit family. Type 2 subfamily. Tetramer of two alpha and two beta subunits. It depends on Mg(2+) as a cofactor.

The protein resides in the cytoplasm. It carries out the reaction tRNA(Phe) + L-phenylalanine + ATP = L-phenylalanyl-tRNA(Phe) + AMP + diphosphate + H(+). In Dictyostelium discoideum (Social amoeba), this protein is Phenylalanine--tRNA ligase beta subunit (phesB).